The following is a 778-amino-acid chain: Endonuclease MutS2 (778 aa).

ATP is bound at residue 329 to 336 (GPNTGGKT). Residues 703–778 (LDLRGKRYEE…GSGCTIVTFK (76 aa)) enclose the Smr domain.

It belongs to the DNA mismatch repair MutS family. MutS2 subfamily. Homodimer. Binds to stalled ribosomes, contacting rRNA.

In terms of biological role, endonuclease that is involved in the suppression of homologous recombination and thus may have a key role in the control of bacterial genetic diversity. Acts as a ribosome collision sensor, splitting the ribosome into its 2 subunits. Detects stalled/collided 70S ribosomes which it binds and splits by an ATP-hydrolysis driven conformational change. Acts upstream of the ribosome quality control system (RQC), a ribosome-associated complex that mediates the extraction of incompletely synthesized nascent chains from stalled ribosomes and their subsequent degradation. Probably generates substrates for RQC. This Streptococcus suis (strain 98HAH33) protein is Endonuclease MutS2.